The sequence spans 208 residues: Uridine kinase (208 aa).

Gly11 to Ser18 is an ATP binding site.

This sequence belongs to the uridine kinase family.

The protein resides in the cytoplasm. The enzyme catalyses uridine + ATP = UMP + ADP + H(+). It catalyses the reaction cytidine + ATP = CMP + ADP + H(+). The protein operates within pyrimidine metabolism; CTP biosynthesis via salvage pathway; CTP from cytidine: step 1/3. Its pathway is pyrimidine metabolism; UMP biosynthesis via salvage pathway; UMP from uridine: step 1/1. The polypeptide is Uridine kinase (Clostridium perfringens (strain SM101 / Type A)).